The following is a 259-amino-acid chain: Ribose-5-phosphate isomerase (259 aa).

This sequence belongs to the ribose 5-phosphate isomerase family.

It localises to the cytoplasm. It carries out the reaction aldehydo-D-ribose 5-phosphate = D-ribulose 5-phosphate. The protein operates within carbohydrate degradation; pentose phosphate pathway; D-ribose 5-phosphate from D-ribulose 5-phosphate (non-oxidative stage): step 1/1. This chain is Ribose-5-phosphate isomerase (RKI1), found in Vanderwaltozyma polyspora (strain ATCC 22028 / DSM 70294 / BCRC 21397 / CBS 2163 / NBRC 10782 / NRRL Y-8283 / UCD 57-17) (Kluyveromyces polysporus).